Consider the following 247-residue polypeptide: Geranylgeranylglyceryl phosphate synthase (247 aa).

Residues aspartate 23 and serine 52 each coordinate Mg(2+). Residues 171-177, 203-204, and 225-226 each bind sn-glycerol 1-phosphate; these read YLEAGSG, GG, and GT.

This sequence belongs to the GGGP/HepGP synthase family. Group II subfamily. Mg(2+) serves as cofactor.

It is found in the cytoplasm. It catalyses the reaction sn-glycerol 1-phosphate + (2E,6E,10E)-geranylgeranyl diphosphate = sn-3-O-(geranylgeranyl)glycerol 1-phosphate + diphosphate. It participates in membrane lipid metabolism; glycerophospholipid metabolism. Functionally, prenyltransferase that catalyzes the transfer of the geranylgeranyl moiety of geranylgeranyl diphosphate (GGPP) to the C3 hydroxyl of sn-glycerol-1-phosphate (G1P). This reaction is the first ether-bond-formation step in the biosynthesis of archaeal membrane lipids. This chain is Geranylgeranylglyceryl phosphate synthase, found in Methanosarcina barkeri (strain Fusaro / DSM 804).